A 358-amino-acid chain; its full sequence is Heat-inducible transcription repressor HrcA (358 aa).

The protein belongs to the HrcA family.

Negative regulator of class I heat shock genes (grpE-dnaK-dnaJ and groELS operons). Prevents heat-shock induction of these operons. The sequence is that of Heat-inducible transcription repressor HrcA from Caulobacter vibrioides (strain ATCC 19089 / CIP 103742 / CB 15) (Caulobacter crescentus).